Consider the following 201-residue polypeptide: Ribosome maturation factor RimP (201 aa).

The protein belongs to the RimP family.

The protein localises to the cytoplasm. Required for maturation of 30S ribosomal subunits. This chain is Ribosome maturation factor RimP, found in Acidiphilium cryptum (strain JF-5).